A 683-amino-acid chain; its full sequence is Cytoskeleton-associated protein 2 (683 aa).

Disordered stretches follow at residues 1–28 and 153–175; these read MSTP…QRRQ and NSKK…KKPV. A phosphoserine mark is found at S178 and S190. Disordered stretches follow at residues 214–236 and 336–403; these read KATK…SSNM and EKSE…EKPV. Positions 219 to 236 are enriched in polar residues; sequence QPVNTSSVTVKSNRSSNM. Basic and acidic residues-rich tracts occupy residues 336 to 345 and 362 to 376; these read EKSEPVDQRR and ETSE…EWKA. S534 carries the post-translational modification Phosphoserine. Phosphothreonine occurs at positions 579 and 582. Residue S595 is modified to Phosphoserine. T596 and T597 each carry phosphothreonine. Y599 carries the post-translational modification Phosphotyrosine. S602 carries the post-translational modification Phosphoserine.

The protein belongs to the CKAP2 family. Associates with alpha- and beta-tubulins. Abundant in testis, thymus, and in tumor derived cell lines, while barely detectable in liver, prostate, and kidney.

It is found in the cytoplasm. The protein localises to the cytoskeleton. It localises to the spindle. The protein resides in the spindle pole. In terms of biological role, possesses microtubule stabilizing properties. Involved in regulating aneuploidy, cell cycling, and cell death in a p53/TP53-dependent manner. This is Cytoskeleton-associated protein 2 from Homo sapiens (Human).